The sequence spans 221 residues: Cytidylate kinase 1 (221 aa).

7–15 is an ATP binding site; the sequence is GPSASGKSS.

It belongs to the cytidylate kinase family. Type 1 subfamily.

Its subcellular location is the cytoplasm. The catalysed reaction is CMP + ATP = CDP + ADP. The enzyme catalyses dCMP + ATP = dCDP + ADP. The chain is Cytidylate kinase 1 from Borreliella afzelii (strain PKo) (Borrelia afzelii).